Consider the following 360-residue polypeptide: Peptide chain release factor 1 (360 aa).

N5-methylglutamine is present on Q237.

Belongs to the prokaryotic/mitochondrial release factor family. Post-translationally, methylated by PrmC. Methylation increases the termination efficiency of RF1.

It localises to the cytoplasm. Its function is as follows. Peptide chain release factor 1 directs the termination of translation in response to the peptide chain termination codons UAG and UAA. The polypeptide is Peptide chain release factor 1 (Pseudomonas syringae pv. syringae (strain B728a)).